We begin with the raw amino-acid sequence, 566 residues long: Mitochondrial distribution and morphology protein 34 (566 aa).

Residues 1–195 (MAFNFNWSPL…LPAIIHRLSL (195 aa)) enclose the SMP-LTD domain. 4 disordered regions span residues 212–237 (PEQT…DSLG), 349–401 (GYGL…NPSV), 432–518 (PERR…SSST), and 539–566 (KLMP…AYGQ). Over residues 358–370 (RHSKAHSRKRKKR) the composition is skewed to basic residues. Over residues 380–401 (TSDTASVSDESAYTETASNPSV) the composition is skewed to polar residues. The span at 444–454 (PRRDIATEMLR) shows a compositional bias: basic and acidic residues.

This sequence belongs to the MDM34 family. Component of the ER-mitochondria encounter structure (ERMES) or MDM complex, composed of mmm1, mdm10, mdm12 and mdm34.

The protein resides in the mitochondrion outer membrane. Its function is as follows. Component of the ERMES/MDM complex, which serves as a molecular tether to connect the endoplasmic reticulum (ER) and mitochondria. Components of this complex are involved in the control of mitochondrial shape and protein biogenesis, and function in nonvesicular lipid trafficking between the ER and mitochondria. Mdm34 is required for the interaction of the ER-resident membrane protein mmm1 and the outer mitochondrial membrane-resident beta-barrel protein mdm10. This is Mitochondrial distribution and morphology protein 34 from Aspergillus flavus (strain ATCC 200026 / FGSC A1120 / IAM 13836 / NRRL 3357 / JCM 12722 / SRRC 167).